Here is a 184-residue protein sequence, read N- to C-terminus: Peptidoglycan-recognition protein SC2 (184 aa).

An N-terminal signal peptide occupies residues 1-20 (MANKALILLAVLFCAQAVLG). The 125-residue stretch at 45–169 (SYAVIHHTAG…RQVGSTECPG (125 aa)) folds into the N-acetylmuramoyl-L-alanine amidase domain. Zn(2+) is bound at residue H50. A disulfide bridge connects residues C57 and C63. Positions 159 and 167 each coordinate Zn(2+).

This sequence belongs to the N-acetylmuramoyl-L-alanine amidase 2 family. Requires Zn(2+) as cofactor. Constitutively expressed at high level in gut, in addition to the induced expression in fat body.

The protein localises to the secreted. It carries out the reaction Hydrolyzes the link between N-acetylmuramoyl residues and L-amino acid residues in certain cell-wall glycopeptides.. N-acetylmuramyl-L-alanine amidase involved in innate immunity by degrading bacterial peptidoglycans (PGN). Probably plays a scavenger role by digesting biologically active PGN into biologically inactive fragments. Has no direct bacteriolytic activity. In Drosophila melanogaster (Fruit fly), this protein is Peptidoglycan-recognition protein SC2 (PGRP-SC2).